We begin with the raw amino-acid sequence, 398 residues long: Phytoene synthase, chloroplastic (398 aa).

This sequence belongs to the phytoene/squalene synthase family. As to quaternary structure, monomer.

It localises to the plastid. It is found in the chloroplast. The catalysed reaction is 2 (2E,6E,10E)-geranylgeranyl diphosphate = 15-cis-phytoene + 2 diphosphate. It functions in the pathway carotenoid biosynthesis; phytoene biosynthesis; all-trans-phytoene from geranylgeranyl diphosphate: step 1/1. In terms of biological role, catalyzes the reaction from prephytoene diphosphate to phytoene. This Daucus carota (Wild carrot) protein is Phytoene synthase, chloroplastic (PSY).